Consider the following 183-residue polypeptide: MDPQTAATLLPLLGWALHGSVLTRRLASARRDPLTGLHTRAGWTARAEHCIHRHPRAAVLLVDLDHFKTLNDTHGHAAGDAALIATAHRLSSWCGRHGTAGRLGGDEFVTAIRDLDAVDLDALTTALHQPTNYDGTALPLAASVGVCRVAELPVPALTDALAAADAAMYAAKGRSRRGSRPAR.

Positions 55–183 constitute a GGDEF domain; that stretch reads PRAAVLLVDL…RSRRGSRPAR (129 aa).

Functionally, might be involved in pSAM2 replication control. This is an uncharacterized protein from Streptomyces ambofaciens.